A 279-amino-acid polypeptide reads, in one-letter code: Presqualene diphosphate synthase (279 aa).

Belongs to the phytoene/squalene synthase family. HpnD subfamily.

The catalysed reaction is 2 (2E,6E)-farnesyl diphosphate = presqualene diphosphate + diphosphate. It participates in secondary metabolite biosynthesis; hopanoid biosynthesis. In terms of biological role, involved in the biosynthesis of the hopanoid precursor squalene (SQ) from farnesyl diphosphate (FPP). Catalyzes the first step, the formation of presqualene diphosphate (PSPP) from two molecules of FPP. This is Presqualene diphosphate synthase from Sinorhizobium fredii (strain NBRC 101917 / NGR234).